A 253-amino-acid polypeptide reads, in one-letter code: Phosphate import ATP-binding protein PstB (253 aa).

Residues 7–249 enclose the ABC transporter domain; the sequence is ASAKNLNLWY…PQSSKTKRYI (243 aa). 39–46 is an ATP binding site; the sequence is GPSGCGKS.

Belongs to the ABC transporter superfamily. Phosphate importer (TC 3.A.1.7) family. In terms of assembly, the complex is composed of two ATP-binding proteins (PstB), two transmembrane proteins (PstC and PstA) and a solute-binding protein (PstS).

The protein resides in the cell inner membrane. The enzyme catalyses phosphate(out) + ATP + H2O = ADP + 2 phosphate(in) + H(+). Functionally, part of the ABC transporter complex PstSACB involved in phosphate import. Responsible for energy coupling to the transport system. The sequence is that of Phosphate import ATP-binding protein PstB from Ehrlichia ruminantium (strain Gardel).